The primary structure comprises 360 residues: Probable dual-specificity RNA methyltransferase RlmN (360 aa).

Glu-91 (proton acceptor) is an active-site residue. In terms of domain architecture, Radical SAM core spans 97-335; that stretch reads QHYGQSVCVT…CVVRQEHGTD (239 aa). A disulfide bridge connects residues Cys-104 and Cys-340. Residues Cys-111, Cys-115, and Cys-118 each coordinate [4Fe-4S] cluster. S-adenosyl-L-methionine-binding positions include 163-164, Ser-195, 218-220, and Asn-296; these read GE and SLH. Catalysis depends on Cys-340, which acts as the S-methylcysteine intermediate.

The protein belongs to the radical SAM superfamily. RlmN family. [4Fe-4S] cluster serves as cofactor.

It is found in the cytoplasm. It carries out the reaction adenosine(2503) in 23S rRNA + 2 reduced [2Fe-2S]-[ferredoxin] + 2 S-adenosyl-L-methionine = 2-methyladenosine(2503) in 23S rRNA + 5'-deoxyadenosine + L-methionine + 2 oxidized [2Fe-2S]-[ferredoxin] + S-adenosyl-L-homocysteine. The enzyme catalyses adenosine(37) in tRNA + 2 reduced [2Fe-2S]-[ferredoxin] + 2 S-adenosyl-L-methionine = 2-methyladenosine(37) in tRNA + 5'-deoxyadenosine + L-methionine + 2 oxidized [2Fe-2S]-[ferredoxin] + S-adenosyl-L-homocysteine. In terms of biological role, specifically methylates position 2 of adenine 2503 in 23S rRNA and position 2 of adenine 37 in tRNAs. This Streptococcus equi subsp. zooepidemicus (strain MGCS10565) protein is Probable dual-specificity RNA methyltransferase RlmN.